Consider the following 810-residue polypeptide: Phenylalanine--tRNA ligase beta subunit (810 aa).

The region spanning 40 to 153 (KLPDQKVIVG…EACEIGQPLA (114 aa)) is the tRNA-binding domain. The region spanning 399–480 (AAQKIVSLRP…RLYGYNNLEP (82 aa)) is the B5 domain. Positions 458, 464, 467, and 468 each coordinate Mg(2+). One can recognise an FDX-ACB domain in the interval 714–808 (SKFPVVERDL…ARSELGAVIR (95 aa)).

Belongs to the phenylalanyl-tRNA synthetase beta subunit family. Type 1 subfamily. Tetramer of two alpha and two beta subunits. The cofactor is Mg(2+).

It localises to the cytoplasm. It carries out the reaction tRNA(Phe) + L-phenylalanine + ATP = L-phenylalanyl-tRNA(Phe) + AMP + diphosphate + H(+). This is Phenylalanine--tRNA ligase beta subunit from Chlorobaculum tepidum (strain ATCC 49652 / DSM 12025 / NBRC 103806 / TLS) (Chlorobium tepidum).